Consider the following 120-residue polypeptide: Holo-[acyl-carrier-protein] synthase (120 aa).

The Mg(2+) site is built by D8 and E58.

It belongs to the P-Pant transferase superfamily. AcpS family. It depends on Mg(2+) as a cofactor.

The protein localises to the cytoplasm. The catalysed reaction is apo-[ACP] + CoA = holo-[ACP] + adenosine 3',5'-bisphosphate + H(+). Its function is as follows. Transfers the 4'-phosphopantetheine moiety from coenzyme A to a Ser of acyl-carrier-protein. This is Holo-[acyl-carrier-protein] synthase from Streptococcus pneumoniae (strain Hungary19A-6).